We begin with the raw amino-acid sequence, 289 residues long: SNF1-related protein kinase regulatory subunit beta-2 (289 aa).

A compositionally biased stretch (basic and acidic residues) spans 1–10 (MGNVNAREEA). Positions 1 to 59 (MGNVNAREEANSNNASAVEDEDAEICSREAMSAASDGNHVAPPELMGQSPPHSPRATQS) are disordered. G2 is lipidated: N-myristoyl glycine. Positions 103 to 180 (PTMITWCHGG…AGNTFNILDL (78 aa)) are kinase-interacting sequence (KIS). Positions 217–289 (EPPVVPPHLQ…TVVLYKSLQR (73 aa)) are association with SNF1 complex (ASC).

It belongs to the 5'-AMP-activated protein kinase beta subunit family. Subunit of a probable heterotrimeric complex consisting of an alpha catalytic (KIN10 or KIN11) subunit, and a beta (KINB) and a gamma (KING or SNF4) non-catalytic regulatory subunits. Interacts with SNF4. Interacts with FLZ1, FLZ2, FLZ8, FLZ9, FLZ10, FLZ12, FLZ13 and FLZ14. In terms of processing, sumoylated. As to expression, expressed in leaves, stems, roots, flower buds and flowers. Not detectable in siliques.

The protein localises to the cell membrane. Regulatory subunit of the probable trimeric SNF1-related protein kinase (SnRK) complex, which may play a role in a signal transduction cascade regulating gene expression and carbohydrate metabolism in higher plants. The SnRK complex may also be involved in the regulation of fatty acid synthesis by phosphorylation of acetyl-CoA carboxylase and in assimilation of nitrogen by phosphorylating nitrate reductase. The chain is SNF1-related protein kinase regulatory subunit beta-2 (KINB2) from Arabidopsis thaliana (Mouse-ear cress).